A 1013-amino-acid polypeptide reads, in one-letter code: Polyprotein of EF-Ts, chloroplastic (1013 aa).

A chloroplast-targeting transit peptide spans 1 to 43 (MLRELGRTATVKAHGRSVLRPVRGPAGRRQVAFTGVRPSVRVF). An S1 motif 1 domain is found at 64–133 (GSEYEGTVTT…EKKRVSLELK (70 aa)). Residues 141-150 (SAEESDDIIT) show a composition bias toward acidic residues. The segment at 141 to 163 (SAEESDDIITEPDREGADATDDD) is disordered. The S1 motif 2 domain occupies 227-331 (MEEVTGKVAR…DGRGISLTHF (105 aa)). A disordered region spans residues 772–798 (QAKAAAPAAPKKEEPKKEEPKKATVAV). The span at 781-793 (PKKEEPKKEEPKK) shows a compositional bias: basic and acidic residues.

Belongs to the EF-Ts family. As to quaternary structure, component of the chloroplast ribosome 30S and 70S subunits, as well as polysomes. Component of the chloroplast ribosome 70S subunit, and at low levels, present in polysomes. In terms of assembly, associates transiently with chloroplast polysomes.

Its subcellular location is the plastid. The protein localises to the chloroplast. Functionally, associates with the EF-Tu.GDP complex and induces the exchange of GDP to GTP. It remains bound to the aminoacyl-tRNA.EF-Tu.GTP complex up to the GTP hydrolysis stage on the ribosome. In terms of biological role, binds to psbD and psbA mRNAs 5'-untranslated regions (UTRs) in vitro. The sequence is that of Polyprotein of EF-Ts, chloroplastic from Chlamydomonas reinhardtii (Chlamydomonas smithii).